The chain runs to 362 residues: NAD(P)H-quinone oxidoreductase subunit 1, chloroplastic (362 aa).

The next 8 membrane-spanning stretches (helical) occupy residues 29 to 49 (ILPI…IVWL), 103 to 123 (IAVI…HFVL), 128 to 148 (IGVF…LMAG), 164 to 184 (AAQS…ISLL), 202 to 222 (FFGW…ISSL), 247 to 267 (YSGI…LVSS), 303 to 323 (TIGI…SITI), and 335 to 355 (LLNL…LLTT).

This sequence belongs to the complex I subunit 1 family. In terms of assembly, NDH is composed of at least 16 different subunits, 5 of which are encoded in the nucleus.

The protein localises to the plastid. Its subcellular location is the chloroplast thylakoid membrane. It carries out the reaction a plastoquinone + NADH + (n+1) H(+)(in) = a plastoquinol + NAD(+) + n H(+)(out). The catalysed reaction is a plastoquinone + NADPH + (n+1) H(+)(in) = a plastoquinol + NADP(+) + n H(+)(out). In terms of biological role, NDH shuttles electrons from NAD(P)H:plastoquinone, via FMN and iron-sulfur (Fe-S) centers, to quinones in the photosynthetic chain and possibly in a chloroplast respiratory chain. The immediate electron acceptor for the enzyme in this species is believed to be plastoquinone. Couples the redox reaction to proton translocation, and thus conserves the redox energy in a proton gradient. This chain is NAD(P)H-quinone oxidoreductase subunit 1, chloroplastic, found in Agrostis stolonifera (Creeping bentgrass).